Consider the following 607-residue polypeptide: Putative pentatricopeptide repeat-containing protein At1g09680 (607 aa).

PPR repeat units follow at residues 239-273 (NVYVFNILMNKFCKEGNISDAQKVFDEITKRSLQP), 274-308 (TVVSFNTLINGYCKVGNLDEGFRLKHQMEKSRTRP), 309-343 (DVFTYSALINALCKENKMDGAHGLFDEMCKRGLIP), 344-378 (NDVIFTTLIHGHSRNGEIDLMKESYQKMLSKGLQP), 379-413 (DIVLYNTLVNGFCKNGDLVAARNIVDGMIRRGLRP), 414-448 (DKITYTTLIDGFCRGGDVETALEIRKEMDQNGIEL), 449-483 (DRVGFSALVCGMCKEGRVIDAERALREMLRAGIKP), 484-518 (DDVTYTMMMDAFCKKGDAQTGFKLLKEMQSDGHVP), and 519-553 (SVVTYNVLLNGLCKLGQMKNADMLLDAMLNIGVVP).

The protein belongs to the PPR family. P subfamily.

This is Putative pentatricopeptide repeat-containing protein At1g09680 from Arabidopsis thaliana (Mouse-ear cress).